A 455-amino-acid polypeptide reads, in one-letter code: MTKGLYIESYGCQMNVYDSLMVEDILRPLGFAAVQRPEDADIIMVNTCHVREKAAEKLYSALGRMRMLRKEGALIVVAGCVAQAEGEAVFERAPFVDVVVGPQSIHTLPELIMKATRDAKQMNVEFPAISKFDVISTDLLVSRGVSAFVSVQEGCDKFCTFCVVPYTRGPEYSRSVEDVLAEVRKLADGGTKEVVLLGQNVNAYHGTYKGNEWDLGRLIRKVAEVEGIERIRYTTSHPRDMHSSLYDAHKHEPKLLPCVHLPVQSGSDSVLRKMNRKHSVQEYMDIIDTLKEARSDIALSSDFIVGFPGETEEDFEATMDLVRHVGFATSYSFKYSPRPGTPGAEYTNQVPEEEKSSRLHRLQHLLLTQQRLFTKSMIGKTVSVLVCGTEGSRSCSNEVFGKSEHMQPVYISVDGDPAGYRNKIFSVKVLEEGARSSLKGIICTDTISLPPPHSM.

In terms of domain architecture, MTTase N-terminal spans 3 to 117 (KGLYIESYGC…LPELIMKATR (115 aa)). [4Fe-4S] cluster-binding residues include cysteine 12, cysteine 48, cysteine 80, cysteine 155, cysteine 159, and cysteine 162. The region spanning 141 to 375 (VSRGVSAFVS…LLTQQRLFTK (235 aa)) is the Radical SAM core domain.

The protein belongs to the methylthiotransferase family. MiaB subfamily. As to quaternary structure, monomer. [4Fe-4S] cluster serves as cofactor.

Its subcellular location is the cytoplasm. It catalyses the reaction N(6)-dimethylallyladenosine(37) in tRNA + (sulfur carrier)-SH + AH2 + 2 S-adenosyl-L-methionine = 2-methylsulfanyl-N(6)-dimethylallyladenosine(37) in tRNA + (sulfur carrier)-H + 5'-deoxyadenosine + L-methionine + A + S-adenosyl-L-homocysteine + 2 H(+). Its function is as follows. Catalyzes the methylthiolation of N6-(dimethylallyl)adenosine (i(6)A), leading to the formation of 2-methylthio-N6-(dimethylallyl)adenosine (ms(2)i(6)A) at position 37 in tRNAs that read codons beginning with uridine. The chain is tRNA-2-methylthio-N(6)-dimethylallyladenosine synthase from Anaplasma marginale (strain St. Maries).